A 318-amino-acid polypeptide reads, in one-letter code: Methionyl-tRNA formyltransferase (318 aa).

(6S)-5,6,7,8-tetrahydrofolate is bound at residue 112-115; the sequence is SILP.

It belongs to the Fmt family.

It carries out the reaction L-methionyl-tRNA(fMet) + (6R)-10-formyltetrahydrofolate = N-formyl-L-methionyl-tRNA(fMet) + (6S)-5,6,7,8-tetrahydrofolate + H(+). Attaches a formyl group to the free amino group of methionyl-tRNA(fMet). The formyl group appears to play a dual role in the initiator identity of N-formylmethionyl-tRNA by promoting its recognition by IF2 and preventing the misappropriation of this tRNA by the elongation apparatus. In Shewanella sp. (strain ANA-3), this protein is Methionyl-tRNA formyltransferase.